The following is a 480-amino-acid chain: Aromatic-L-amino-acid decarboxylase (480 aa).

Met-1 carries the post-translational modification N-acetylmethionine. 2 tandem repeats follow at residues 58–115 and 118–178. The 2 X approximate tandem repeats stretch occupies residues 58-178; sequence KDIEKIIMPG…AASPEFTQAA (121 aa). Thr-82 is a binding site for substrate. Pyridoxal 5'-phosphate contacts are provided by Ala-148 and Ser-149. His-192 contacts substrate. The pyridoxal 5'-phosphate site is built by Thr-246 and Asn-300. Lys-303 is subject to N6-(pyridoxal phosphate)lysine.

This sequence belongs to the group II decarboxylase family. Homodimer. Pyridoxal 5'-phosphate is required as a cofactor.

It catalyses the reaction L-dopa + H(+) = dopamine + CO2. It carries out the reaction 5-hydroxy-L-tryptophan + H(+) = serotonin + CO2. It functions in the pathway catecholamine biosynthesis; dopamine biosynthesis; dopamine from L-tyrosine: step 2/2. Functionally, catalyzes the decarboxylation of L-3,4-dihydroxyphenylalanine (DOPA) to dopamine and L-5-hydroxytryptophan to serotonin. The sequence is that of Aromatic-L-amino-acid decarboxylase (Ddc) from Mus musculus (Mouse).